A 134-amino-acid chain; its full sequence is Profilin-2 (134 aa).

An intrachain disulfide couples cysteine 13 to cysteine 118. Residues 84-100 (AVIRGKKGSGGITIKKT) carry the Involved in PIP2 interaction motif. Threonine 114 carries the post-translational modification Phosphothreonine.

This sequence belongs to the profilin family. Occurs in many kinds of cells as a complex with monomeric actin in a 1:1 ratio. Phosphorylated by MAP kinases.

Its subcellular location is the cytoplasm. The protein localises to the cytoskeleton. Binds to actin and affects the structure of the cytoskeleton. At high concentrations, profilin prevents the polymerization of actin, whereas it enhances it at low concentrations. The chain is Profilin-2 from Olea europaea (Common olive).